We begin with the raw amino-acid sequence, 310 residues long: Aspartate carbamoyltransferase catalytic subunit (310 aa).

Carbamoyl phosphate contacts are provided by arginine 54 and threonine 55. An L-aspartate-binding site is contributed by lysine 84. Carbamoyl phosphate is bound by residues arginine 105, histidine 134, and glutamine 137. L-aspartate contacts are provided by arginine 167 and arginine 229. Residues leucine 267 and proline 268 each coordinate carbamoyl phosphate.

Belongs to the aspartate/ornithine carbamoyltransferase superfamily. ATCase family. Heterododecamer (2C3:3R2) of six catalytic PyrB chains organized as two trimers (C3), and six regulatory PyrI chains organized as three dimers (R2).

It carries out the reaction carbamoyl phosphate + L-aspartate = N-carbamoyl-L-aspartate + phosphate + H(+). The protein operates within pyrimidine metabolism; UMP biosynthesis via de novo pathway; (S)-dihydroorotate from bicarbonate: step 2/3. Its function is as follows. Catalyzes the condensation of carbamoyl phosphate and aspartate to form carbamoyl aspartate and inorganic phosphate, the committed step in the de novo pyrimidine nucleotide biosynthesis pathway. The sequence is that of Aspartate carbamoyltransferase catalytic subunit from Enterobacter sp. (strain 638).